The following is a 241-amino-acid chain: FKBP-type peptidyl-prolyl cis-trans isomerase FkpA (241 aa).

The PPIase FKBP-type domain maps to 153-241 (ETKITVHYKG…IELLDVVNGV (89 aa)).

Belongs to the FKBP-type PPIase family.

The catalysed reaction is [protein]-peptidylproline (omega=180) = [protein]-peptidylproline (omega=0). PPIases accelerate the folding of proteins. It catalyzes the cis-trans isomerization of proline imidic peptide bonds in oligopeptides. This Buchnera aphidicola subsp. Acyrthosiphon pisum (strain APS) (Acyrthosiphon pisum symbiotic bacterium) protein is FKBP-type peptidyl-prolyl cis-trans isomerase FkpA (fkpA).